The primary structure comprises 449 residues: Serine/threonine-protein phosphatase 2A activator 2 (449 aa).

Disordered regions lie at residues 1-72 (MDSS…DPST) and 378-416 (MSEQ…PTGW). Positions 54 to 69 (NPTPVPETPALPPRPD) are enriched in pro residues. Residues 389–403 (EENEEEGGEVEVYDD) show a composition bias toward acidic residues.

The protein belongs to the PTPA-type PPIase family.

It localises to the cytoplasm. It catalyses the reaction [protein]-peptidylproline (omega=180) = [protein]-peptidylproline (omega=0). PPIases accelerate the folding of proteins. It catalyzes the cis-trans isomerization of proline imidic peptide bonds in oligopeptides. Acts as a regulatory subunit for PP2A-like phosphatases modulating their activity or substrate specificity, probably by inducing a conformational change in the catalytic subunit, a direct target of the PPIase. Can reactivate inactive phosphatase PP2A-phosphatase methylesterase complexes (PP2Ai) in presence of ATP and Mg(2+) by dissociating the inactive form from the complex. The polypeptide is Serine/threonine-protein phosphatase 2A activator 2 (rrd-2) (Neurospora crassa (strain ATCC 24698 / 74-OR23-1A / CBS 708.71 / DSM 1257 / FGSC 987)).